Here is a 314-residue protein sequence, read N- to C-terminus: tRNA pseudouridine synthase B (314 aa).

Position 43 (histidine 43) interacts with substrate. The active-site Nucleophile is aspartate 48. Positions 76, 179, and 200 each coordinate substrate.

This sequence belongs to the pseudouridine synthase TruB family. Type 1 subfamily.

The enzyme catalyses uridine(55) in tRNA = pseudouridine(55) in tRNA. Functionally, responsible for synthesis of pseudouridine from uracil-55 in the psi GC loop of transfer RNAs. This Citrobacter koseri (strain ATCC BAA-895 / CDC 4225-83 / SGSC4696) protein is tRNA pseudouridine synthase B.